The following is a 93-amino-acid chain: Phosphoribosyl-ATP pyrophosphatase (93 aa).

This sequence belongs to the PRA-PH family.

It is found in the cytoplasm. It carries out the reaction 1-(5-phospho-beta-D-ribosyl)-ATP + H2O = 1-(5-phospho-beta-D-ribosyl)-5'-AMP + diphosphate + H(+). It participates in amino-acid biosynthesis; L-histidine biosynthesis; L-histidine from 5-phospho-alpha-D-ribose 1-diphosphate: step 2/9. The protein is Phosphoribosyl-ATP pyrophosphatase of Mycolicibacterium vanbaalenii (strain DSM 7251 / JCM 13017 / BCRC 16820 / KCTC 9966 / NRRL B-24157 / PYR-1) (Mycobacterium vanbaalenii).